The primary structure comprises 103 residues: Iron-sulfur cluster assembly protein CyaY (103 aa).

The protein belongs to the frataxin family.

Its function is as follows. Involved in iron-sulfur (Fe-S) cluster assembly. May act as a regulator of Fe-S biogenesis. The sequence is that of Iron-sulfur cluster assembly protein CyaY from Rickettsia peacockii (strain Rustic).